Consider the following 241-residue polypeptide: Phosphoribosylaminoimidazole-succinocarboxamide synthase (241 aa).

Belongs to the SAICAR synthetase family.

The enzyme catalyses 5-amino-1-(5-phospho-D-ribosyl)imidazole-4-carboxylate + L-aspartate + ATP = (2S)-2-[5-amino-1-(5-phospho-beta-D-ribosyl)imidazole-4-carboxamido]succinate + ADP + phosphate + 2 H(+). It functions in the pathway purine metabolism; IMP biosynthesis via de novo pathway; 5-amino-1-(5-phospho-D-ribosyl)imidazole-4-carboxamide from 5-amino-1-(5-phospho-D-ribosyl)imidazole-4-carboxylate: step 1/2. This chain is Phosphoribosylaminoimidazole-succinocarboxamide synthase, found in Lacticaseibacillus paracasei (strain ATCC 334 / BCRC 17002 / CCUG 31169 / CIP 107868 / KCTC 3260 / NRRL B-441) (Lactobacillus paracasei).